Here is a 341-residue protein sequence, read N- to C-terminus: tRNA N6-adenosine threonylcarbamoyltransferase (341 aa).

2 residues coordinate Fe cation: H117 and H121. Substrate-binding positions include 139–143 (VVSGG), D172, G185, D189, and N278. Residue D307 participates in Fe cation binding.

The protein belongs to the KAE1 / TsaD family. Fe(2+) serves as cofactor.

Its subcellular location is the cytoplasm. It carries out the reaction L-threonylcarbamoyladenylate + adenosine(37) in tRNA = N(6)-L-threonylcarbamoyladenosine(37) in tRNA + AMP + H(+). Functionally, required for the formation of a threonylcarbamoyl group on adenosine at position 37 (t(6)A37) in tRNAs that read codons beginning with adenine. Is involved in the transfer of the threonylcarbamoyl moiety of threonylcarbamoyl-AMP (TC-AMP) to the N6 group of A37, together with TsaE and TsaB. TsaD likely plays a direct catalytic role in this reaction. The chain is tRNA N6-adenosine threonylcarbamoyltransferase from Bacillus licheniformis (strain ATCC 14580 / DSM 13 / JCM 2505 / CCUG 7422 / NBRC 12200 / NCIMB 9375 / NCTC 10341 / NRRL NRS-1264 / Gibson 46).